The sequence spans 155 residues: Small ribosomal subunit protein uS7 (155 aa).

Belongs to the universal ribosomal protein uS7 family. In terms of assembly, part of the 30S ribosomal subunit. Contacts proteins S9 and S11.

Functionally, one of the primary rRNA binding proteins, it binds directly to 16S rRNA where it nucleates assembly of the head domain of the 30S subunit. Is located at the subunit interface close to the decoding center, probably blocks exit of the E-site tRNA. In Corynebacterium efficiens (strain DSM 44549 / YS-314 / AJ 12310 / JCM 11189 / NBRC 100395), this protein is Small ribosomal subunit protein uS7.